Consider the following 545-residue polypeptide: Membrane protein insertase YidC (545 aa).

Residues 6–26 form a helical membrane-spanning segment; that stretch reads FVLFVFFIFLSFLLWEQWQID. Residues 32 to 69 are disordered; the sequence is QAVAQTDGASRPAGDLPQRPSDDESDVTVHTEAPTQEG. The next 4 membrane-spanning stretches (helical) occupy residues 354–374, 425–445, 462–482, and 500–520; these read FFNN…ALFF, GGCL…WVLV, LSSK…MFIQ, and FFPL…VLYW.

This sequence belongs to the OXA1/ALB3/YidC family. Type 1 subfamily. In terms of assembly, interacts with the Sec translocase complex via SecD. Specifically interacts with transmembrane segments of nascent integral membrane proteins during membrane integration.

The protein resides in the cell inner membrane. Its function is as follows. Required for the insertion and/or proper folding and/or complex formation of integral membrane proteins into the membrane. Involved in integration of membrane proteins that insert both dependently and independently of the Sec translocase complex, as well as at least some lipoproteins. Aids folding of multispanning membrane proteins. The sequence is that of Membrane protein insertase YidC from Methylococcus capsulatus (strain ATCC 33009 / NCIMB 11132 / Bath).